The primary structure comprises 269 residues: 3-methyl-2-oxobutanoate hydroxymethyltransferase (269 aa).

2 residues coordinate Mg(2+): Asp-42 and Asp-81. 3-methyl-2-oxobutanoate-binding positions include 42-43, Asp-81, and Lys-111; that span reads DS. Glu-113 is a binding site for Mg(2+). Residue Glu-179 is the Proton acceptor of the active site. The segment at 250–269 is disordered; it reads SGEFPRESHSHTEDELDDLY. Positions 252-262 are enriched in basic and acidic residues; sequence EFPRESHSHTE.

It belongs to the PanB family. In terms of assembly, homodecamer; pentamer of dimers. Mg(2+) is required as a cofactor.

It is found in the cytoplasm. It carries out the reaction 3-methyl-2-oxobutanoate + (6R)-5,10-methylene-5,6,7,8-tetrahydrofolate + H2O = 2-dehydropantoate + (6S)-5,6,7,8-tetrahydrofolate. It functions in the pathway cofactor biosynthesis; coenzyme A biosynthesis. Its function is as follows. Catalyzes the reversible reaction in which hydroxymethyl group from 5,10-methylenetetrahydrofolate is transferred onto alpha-ketoisovalerate to form ketopantoate. This is 3-methyl-2-oxobutanoate hydroxymethyltransferase from Haloarcula marismortui (strain ATCC 43049 / DSM 3752 / JCM 8966 / VKM B-1809) (Halobacterium marismortui).